The following is a 99-amino-acid chain: Aspartyl/glutamyl-tRNA(Asn/Gln) amidotransferase subunit C (99 aa).

It belongs to the GatC family. In terms of assembly, heterotrimer of A, B and C subunits.

It catalyses the reaction L-glutamyl-tRNA(Gln) + L-glutamine + ATP + H2O = L-glutaminyl-tRNA(Gln) + L-glutamate + ADP + phosphate + H(+). The enzyme catalyses L-aspartyl-tRNA(Asn) + L-glutamine + ATP + H2O = L-asparaginyl-tRNA(Asn) + L-glutamate + ADP + phosphate + 2 H(+). Functionally, allows the formation of correctly charged Asn-tRNA(Asn) or Gln-tRNA(Gln) through the transamidation of misacylated Asp-tRNA(Asn) or Glu-tRNA(Gln) in organisms which lack either or both of asparaginyl-tRNA or glutaminyl-tRNA synthetases. The reaction takes place in the presence of glutamine and ATP through an activated phospho-Asp-tRNA(Asn) or phospho-Glu-tRNA(Gln). The sequence is that of Aspartyl/glutamyl-tRNA(Asn/Gln) amidotransferase subunit C from Variovorax paradoxus (strain S110).